A 685-amino-acid chain; its full sequence is T-box transcription factor TBX2 (685 aa).

Residues 104–277 (LWDQFHKLGT…NNPFAKGFRD (174 aa)) constitute a DNA-binding region (T-box). Disordered regions lie at residues 270-433 (PFAK…CGSL) and 606-660 (NLLT…SINE). 4 stretches are compositionally biased toward basic and acidic residues: residues 296–308 (MYEE…RDGA), 340–361 (SNRE…EVRT), 378–403 (RLED…KDGG), and 410–428 (SLEK…KSDP). The segment covering 606 to 617 (NLLTTGLSASLN) has biased composition (polar residues). Over residues 618-633 (PGSESSKPGSSRESSP) the composition is skewed to low complexity. Positions 652–676 (ASMKDSINELQNIQRLVSGLESQRE) form a coiled coil.

Binds DNA as a monomer.

It localises to the nucleus. Functionally, transcription factor which acts as a transcriptional repressor. May also function as a transcriptional activator. Binds to the palindromic T site 5'-TTCACACCTAGGTGTGAA-3' DNA sequence, or a half-site, which are present in the regulatory region of several genes. This chain is T-box transcription factor TBX2 (tbx2), found in Xenopus tropicalis (Western clawed frog).